Reading from the N-terminus, the 297-residue chain is N-acetylmuramic acid 6-phosphate etherase (297 aa).

The SIS domain maps to 55–218; it reads AAKRYSKGGR…STGVMIKQGK (164 aa). E83 (proton donor) is an active-site residue. E114 is an active-site residue.

It belongs to the GCKR-like family. MurNAc-6-P etherase subfamily. In terms of assembly, homodimer.

It catalyses the reaction N-acetyl-D-muramate 6-phosphate + H2O = N-acetyl-D-glucosamine 6-phosphate + (R)-lactate. It participates in amino-sugar metabolism; N-acetylmuramate degradation. Its function is as follows. Specifically catalyzes the cleavage of the D-lactyl ether substituent of MurNAc 6-phosphate, producing GlcNAc 6-phosphate and D-lactate. The sequence is that of N-acetylmuramic acid 6-phosphate etherase from Lactobacillus gasseri (strain ATCC 33323 / DSM 20243 / BCRC 14619 / CIP 102991 / JCM 1131 / KCTC 3163 / NCIMB 11718 / NCTC 13722 / AM63).